The chain runs to 295 residues: Acetylglutamate kinase (295 aa).

Substrate contacts are provided by residues 66–67, arginine 88, and asparagine 193; that span reads GG.

The protein belongs to the acetylglutamate kinase family. ArgB subfamily.

Its subcellular location is the cytoplasm. The catalysed reaction is N-acetyl-L-glutamate + ATP = N-acetyl-L-glutamyl 5-phosphate + ADP. Its pathway is amino-acid biosynthesis; L-arginine biosynthesis; N(2)-acetyl-L-ornithine from L-glutamate: step 2/4. Its function is as follows. Catalyzes the ATP-dependent phosphorylation of N-acetyl-L-glutamate. The sequence is that of Acetylglutamate kinase from Sinorhizobium medicae (strain WSM419) (Ensifer medicae).